Here is a 276-residue protein sequence, read N- to C-terminus: NH(3)-dependent NAD(+) synthetase (276 aa).

43-50 (GISGGVDS) contributes to the ATP binding site. Residue aspartate 49 participates in Mg(2+) binding. Residue arginine 146 coordinates deamido-NAD(+). Threonine 166 provides a ligand contact to ATP. Mg(2+) is bound at residue glutamate 171. Deamido-NAD(+) is bound by residues lysine 179 and aspartate 186. 2 residues coordinate ATP: lysine 195 and threonine 217. 266–267 (HK) contributes to the deamido-NAD(+) binding site.

It belongs to the NAD synthetase family. As to quaternary structure, homodimer.

It catalyses the reaction deamido-NAD(+) + NH4(+) + ATP = AMP + diphosphate + NAD(+) + H(+). It functions in the pathway cofactor biosynthesis; NAD(+) biosynthesis; NAD(+) from deamido-NAD(+) (ammonia route): step 1/1. Catalyzes the ATP-dependent amidation of deamido-NAD to form NAD. Uses ammonia as a nitrogen source. This chain is NH(3)-dependent NAD(+) synthetase, found in Shewanella amazonensis (strain ATCC BAA-1098 / SB2B).